The chain runs to 282 residues: Probable endonuclease 4 (282 aa).

9 residues coordinate Zn(2+): His-69, His-109, Glu-145, Asp-179, His-182, His-216, Asp-229, His-231, and Glu-261.

This sequence belongs to the AP endonuclease 2 family. Zn(2+) is required as a cofactor.

The catalysed reaction is Endonucleolytic cleavage to 5'-phosphooligonucleotide end-products.. Its function is as follows. Endonuclease IV plays a role in DNA repair. It cleaves phosphodiester bonds at apurinic or apyrimidinic (AP) sites, generating a 3'-hydroxyl group and a 5'-terminal sugar phosphate. The sequence is that of Probable endonuclease 4 from Campylobacter hominis (strain ATCC BAA-381 / DSM 21671 / CCUG 45161 / LMG 19568 / NCTC 13146 / CH001A).